Reading from the N-terminus, the 207-residue chain is Large ribosomal subunit protein uL4 (207 aa).

A disordered region spans residues 44-81; sequence KRQGTQSAKTRSEVRGGGRKPWRQKGTGRARQGSIRSP. Residues 60–71 are compositionally biased toward basic residues; the sequence is GGRKPWRQKGTG.

The protein belongs to the universal ribosomal protein uL4 family. As to quaternary structure, part of the 50S ribosomal subunit.

In terms of biological role, one of the primary rRNA binding proteins, this protein initially binds near the 5'-end of the 23S rRNA. It is important during the early stages of 50S assembly. It makes multiple contacts with different domains of the 23S rRNA in the assembled 50S subunit and ribosome. Functionally, forms part of the polypeptide exit tunnel. This is Large ribosomal subunit protein uL4 from Finegoldia magna (strain ATCC 29328 / DSM 20472 / WAL 2508) (Peptostreptococcus magnus).